Consider the following 224-residue polypeptide: Deoxyribose-phosphate aldolase (224 aa).

Asp92 functions as the Proton donor/acceptor in the catalytic mechanism. Catalysis depends on Lys155, which acts as the Schiff-base intermediate with acetaldehyde. Lys184 acts as the Proton donor/acceptor in catalysis.

The protein belongs to the DeoC/FbaB aldolase family. DeoC type 1 subfamily.

Its subcellular location is the cytoplasm. It carries out the reaction 2-deoxy-D-ribose 5-phosphate = D-glyceraldehyde 3-phosphate + acetaldehyde. Its pathway is carbohydrate degradation; 2-deoxy-D-ribose 1-phosphate degradation; D-glyceraldehyde 3-phosphate and acetaldehyde from 2-deoxy-alpha-D-ribose 1-phosphate: step 2/2. Functionally, catalyzes a reversible aldol reaction between acetaldehyde and D-glyceraldehyde 3-phosphate to generate 2-deoxy-D-ribose 5-phosphate. This Clostridium perfringens (strain SM101 / Type A) protein is Deoxyribose-phosphate aldolase.